The sequence spans 296 residues: Cytidine deaminase (296 aa).

2 consecutive CMP/dCMP-type deaminase domains span residues 47 to 167 and 186 to 296; these read TEAE…FGPK and DSSD…VDPV. 88-90 contributes to the substrate binding site; the sequence is NLE. Zn(2+) is bound at residue H101. The active-site Proton donor is E103. 2 residues coordinate Zn(2+): C128 and C131.

This sequence belongs to the cytidine and deoxycytidylate deaminase family. As to quaternary structure, homodimer. Zn(2+) is required as a cofactor.

It carries out the reaction cytidine + H2O + H(+) = uridine + NH4(+). The enzyme catalyses 2'-deoxycytidine + H2O + H(+) = 2'-deoxyuridine + NH4(+). In terms of biological role, this enzyme scavenges exogenous and endogenous cytidine and 2'-deoxycytidine for UMP synthesis. The sequence is that of Cytidine deaminase from Shewanella sp. (strain W3-18-1).